The chain runs to 185 residues: Probable chorismate pyruvate-lyase (185 aa).

3 residues coordinate substrate: Arg75, Leu113, and Glu170.

This sequence belongs to the UbiC family.

The protein localises to the cytoplasm. The enzyme catalyses chorismate = 4-hydroxybenzoate + pyruvate. It participates in cofactor biosynthesis; ubiquinone biosynthesis. Functionally, removes the pyruvyl group from chorismate, with concomitant aromatization of the ring, to provide 4-hydroxybenzoate (4HB) for the ubiquinone pathway. The sequence is that of Probable chorismate pyruvate-lyase from Coxiella burnetii (strain RSA 493 / Nine Mile phase I).